Consider the following 312-residue polypeptide: Malate dehydrogenase (312 aa).

NAD(+)-binding positions include 7 to 13 (GAAGGIG) and D34. Substrate-binding residues include R81 and R87. NAD(+) is bound by residues N94 and 117–119 (ITN). 2 residues coordinate substrate: N119 and R153. H177 functions as the Proton acceptor in the catalytic mechanism. M227 contacts NAD(+).

The protein belongs to the LDH/MDH superfamily. MDH type 1 family. In terms of assembly, homodimer.

The catalysed reaction is (S)-malate + NAD(+) = oxaloacetate + NADH + H(+). Functionally, catalyzes the reversible oxidation of malate to oxaloacetate. This chain is Malate dehydrogenase, found in Escherichia coli O7:K1 (strain IAI39 / ExPEC).